We begin with the raw amino-acid sequence, 389 residues long: E3 ubiquitin-protein ligase E3D (389 aa).

Ala2 carries the post-translational modification N-acetylalanine. The BRAT1-like motif motif lies at 129 to 159 (PLPGDNWGALVDEWCCHPDPFANKPLHPREN). Residue Cys144 coordinates Zn(2+). The interaction with UBE2C stretch occupies residues 235 to 257 (LPSERNFPIIPRSQFVQSVLAQC). The segment at 353-389 (LPSTTCLELLLILSKSNATLPPSLRCMNSFQVAFLKM) is HECT-like.

As to quaternary structure, interacts with UBE2C/UbcH10 (E2 ubiquitin-conjugating enzyme). In vitro, interacts with cyclin-B. In terms of processing, ubiquitinated by UBCH10 (E2 ubiquitin-conjugating enzyme).

The protein resides in the cytoplasm. It carries out the reaction S-ubiquitinyl-[E2 ubiquitin-conjugating enzyme]-L-cysteine + [acceptor protein]-L-lysine = [E2 ubiquitin-conjugating enzyme]-L-cysteine + N(6)-ubiquitinyl-[acceptor protein]-L-lysine.. Its pathway is protein modification; protein ubiquitination. In terms of biological role, E3 ubiquitin-protein ligase which accepts ubiquitin from specific E2 ubiquitin-conjugating enzymes, and transfers it to substrates, generally promoting their degradation by the proteasome. Independently of its E3 ubiquitin-protein ligase activity, acts as an inhibitor of CPSF3 endonuclease activity by blocking CPSF3 active site. In Bos taurus (Bovine), this protein is E3 ubiquitin-protein ligase E3D (UBE3D).